The chain runs to 71 residues: MAEDVRAEIVASVLEVVVHEGDQIGEGDTLVLLESMKMEIPVLAEVAGTVTKVNVAEGDVIQAGHLIAVID.

In terms of domain architecture, Biotinyl-binding spans 2–71; sequence AEDVRAEIVA…QAGHLIAVID (70 aa). At lysine 37 the chain carries N6-biotinyllysine.

The protein is Biotinylated protein TB7.3 homolog of Mycolicibacterium smegmatis (strain ATCC 700084 / mc(2)155) (Mycobacterium smegmatis).